We begin with the raw amino-acid sequence, 142 residues long: Ovocleidin-17 (142 aa).

3 disulfide bridges follow: Cys5–Cys16, Cys33–Cys138, and Cys113–Cys130. The C-type lectin domain occupies 12–139 (TPGGCLGFFS…CTERNAFVCK (128 aa)). Residue Asn59 is glycosylated (N-linked (GlcNAc...) asparagine). Ser61 and Ser67 each carry phosphoserine.

As to expression, expressed in the shell gland mucosa. Not detected in hen liver, magnum, isthmus, cartilage, bone or in egg white or yolk.

The protein localises to the secreted. It localises to the extracellular space. The protein resides in the extracellular matrix. In terms of biological role, may form proteinaceous networks during the construction of the eggshell which then may control the deposition of the mineral phase. This is Ovocleidin-17 from Gallus gallus (Chicken).